The following is a 533-amino-acid chain: Leucine-rich glioma-inactivated protein 1 (533 aa).

The signal sequence occupies residues 1–34 (MESERSQRMGNACIPLKRIAYCLCLLSALLLTEG). The 38-residue stretch at 35–72 (KKPAKPKCPAVCTCTKDNALCENARSIPRTVPPDVISL) folds into the LRRNT domain. LRR repeat units follow at residues 92–113 (HLEYLFIENNNIKSISRHTFRG) and 116–137 (SLIHLSLANNNLQTLPKDIFKG). In terms of domain architecture, LRRCT spans 149–199 (NSFNCDCKLKWLVEWLSHTNATVEDIYCEGPPEYKKRKINSLSSKDFDCII). N-linked (GlcNAc...) asparagine glycosylation occurs at N168. EAR repeat units follow at residues 201-243 (EFAK…EWDH), 247-289 (TFRN…KRDS), 293-340 (KFIK…KWNG), 342-391 (GFYS…QWNK), 395-438 (LFTN…KWGG), 440-482 (SFQD…NWDA), and 486-528 (KFVK…KHVI). N253 carries an N-linked (GlcNAc...) asparagine glycan. N-linked (GlcNAc...) asparagine glycosylation is present at N398.

Oligomer. Interacts with KCNA1 within a complex containing KCNA1, KCNA4 and KCNAB1. Part of a complex containing ADAM22, DLG4/PSD95 and CACNG2 (stargazin). Can bind to ADAM11 and ADAM23. In terms of processing, glycosylated.

It localises to the secreted. The protein resides in the synapse. Its subcellular location is the cytoplasm. Functionally, regulates voltage-gated potassium channels assembled from KCNA1, KCNA4 and KCNAB1. It slows down channel inactivation by precluding channel closure mediated by the KCNAB1 subunit. Ligand for ADAM22 that positively regulates synaptic transmission mediated by AMPA-type glutamate receptors. Plays a role in suppressing the production of MMP1/3 through the phosphatidylinositol 3-kinase/ERK pathway. This is Leucine-rich glioma-inactivated protein 1 (LGI1) from Bos taurus (Bovine).